The following is a 62-amino-acid chain: Cytotoxin-like basic protein (62 aa).

Cystine bridges form between C3–C22, C15–C40, C44–C55, and C56–C61.

The protein belongs to the three-finger toxin family. Short-chain subfamily. Orphan group XV sub-subfamily. In terms of tissue distribution, expressed by the venom gland.

It is found in the secreted. The protein resides in the target cell membrane. In terms of biological role, has low cytotoxic activity. This chain is Cytotoxin-like basic protein, found in Naja naja (Indian cobra).